The sequence spans 1235 residues: JNK-interacting protein 3 (1235 aa).

The tract at residues 1-22 (MMDNDDALLNNGGPQSGAETVY) is disordered. The RH1 domain maps to 25 to 113 (EDNNMVMSEK…VTQYEREKSA (89 aa)). Residues 84 to 184 (RINQEQDVEL…NKLHERYTEL (101 aa)) adopt a coiled-coil conformation. The tract at residues 278–325 (GAATDSLQQQHQATSPQSPPDTSPVVPNVPPANVGRSTTKKEQRSDNN) is disordered. The segment covering 282-293 (DSLQQQHQATSP) has biased composition (polar residues). Residues 294–307 (QSPPDTSPVVPNVP) are compositionally biased toward pro residues. A coiled-coil region spans residues 366-493 (GKEVENLIME…AVRLTEILRA (128 aa)). The RH2 domain occupies 456 to 526 (RKRFTRVEMA…TPSNRPTERI (71 aa)). Disordered regions lie at residues 520-572 (NRPT…MHPA), 813-852 (KPKS…PVNA), and 869-897 (PGAP…STGS). Residues 529–543 (GLGGGPMFRNTGGGS) are compositionally biased toward gly residues. Low complexity-rich tracts occupy residues 544-555 (PAHSHGSPSRGS) and 821-830 (NSNSKPQQQQ). Polar residues predominate over residues 874–897 (RLSSGNSGSDGNQANNNNSSSTGS).

Belongs to the JIP scaffold family. Forms homo- and heterooligomeric complexes. Binds the TPR motif-containing C-terminal of kinesin light chain, Klc. Pre-assembled syd scaffolding complexes are then transported as a cargo of kinesin, to the required subcellular location.

Its subcellular location is the cytoplasm. In terms of biological role, the JNK-interacting protein (JIP) group of scaffold proteins selectively mediates JNK-signaling by aggregating specific components of the MAPK cascade to form a functional JNK signaling module. May function as a regulator of vesicle transport, through interactions with the JNK-signaling components and motor proteins. Syd is required for efficient kinesin-I mediated axonal transport. The chain is JNK-interacting protein 3 from Drosophila pseudoobscura pseudoobscura (Fruit fly).